The following is a 560-amino-acid chain: General negative regulator of transcription subunit 5 (560 aa).

Coiled-coil stretches lie at residues 3–26 (QRKL…DFDD), 37–71 (SNSS…SKED), and 124–177 (KRDQ…NEMD). The interval 212–330 (CEIQPSSSNN…DSEQQLNFPP (119 aa)) is disordered. A compositionally biased stretch (polar residues) spans 215–237 (QPSSSNNEAPKEGNNQTSLSSIR). Residues 273–288 (SQSISSTPTPVSTDTP) are compositionally biased toward low complexity. Residues 299–311 (FDNSTLGTPTTHV) show a composition bias toward polar residues. A Phosphothreonine modification is found at threonine 306. Lysine 338 is covalently cross-linked (Glycyl lysine isopeptide (Lys-Gly) (interchain with G-Cter in ubiquitin)). A Phosphoserine modification is found at serine 377.

It belongs to the CNOT2/3/5 family. As to quaternary structure, forms a NOT protein complex that comprises NOT1, NOT2, NOT3, NOT4 and NOT5. Subunit of the 1.0 MDa CCR4-NOT core complex that contains CCR4, CAF1, NOT1, NOT2, NOT3, NOT4, NOT5, CAF40 and CAF130. In the complex interacts with NOT1 and NOT2. The core complex probably is part of a less characterized 1.9 MDa CCR4-NOT complex.

The protein localises to the cytoplasm. It localises to the nucleus. Its function is as follows. Acts as a component of the CCR4-NOT core complex, which in the nucleus seems to be a general transcription factor, and in the cytoplasm the major mRNA deadenylase involved in mRNA turnover. The NOT protein subcomplex negatively regulates the basal and activated transcription of many genes. Preferentially affects TC-type TATA element-dependent transcription. Could directly or indirectly inhibit component(s) of the general transcription machinery. In Saccharomyces cerevisiae (strain ATCC 204508 / S288c) (Baker's yeast), this protein is General negative regulator of transcription subunit 5 (NOT5).